A 1959-amino-acid chain; its full sequence is Sodium channel protein type 10 subunit alpha (1959 aa).

Residues 1-125 (MEFPIGSVGT…FNLIRRTAIK (125 aa)) are Cytoplasmic-facing. The tract at residues 30 to 53 (AHGAAKKARAKHGERKGQDEKPRP) is disordered. Residues 33-43 (AAKKARAKHGE) show a composition bias toward basic residues. The segment covering 44–53 (RKGQDEKPRP) has biased composition (basic and acidic residues). One copy of the I repeat lies at 116–404 (FNLIRRTAIK…VTMAYEEQNQ (289 aa)). Residues 126-149 (VSVHAWFSIFITITILFNCVCMTQ) traverse the membrane as a helical segment. At 150–154 (NDLPE) the chain is on the extracellular side. The helical transmembrane segment at 155 to 174 (KIEYAFTVIYTFEALIKILA) threads the bilayer. Residues 175-187 (RGFCLNEFTYLRD) are Cytoplasmic-facing. A helical membrane pass occupies residues 188–206 (PWNWLDFSVITLAYVGAAI). Residues 207–212 (DLRGIS) lie on the Extracellular side of the membrane. The chain crosses the membrane as a helical; Voltage-sensor span at residues 213-232 (GLRTFRVLRALKTVSVIPGL). Residues 233–248 (KVIVGALIHSVRKLAD) lie on the Cytoplasmic side of the membrane. A helical transmembrane segment spans residues 249–272 (VTILTVFCLSVFALVGLQLFKGNL). Residues 273–340 (KNKCIKRSTD…PDFNYTSFDS (68 aa)) lie on the Extracellular side of the membrane. An intrachain disulfide couples Cys276 to Cys318. 3 N-linked (GlcNAc...) asparagine glycosylation sites follow: Asn288, Asn311, and Asn334. Residues 341–365 (FAWAFLSLFRLMTQDSWERLYQQTL) constitute an intramembrane region (pore-forming). The Extracellular segment spans residues 366 to 372 (RASGKMY). A helical membrane pass occupies residues 373–398 (MVFFVLVIFLGSFYLVNLILAVVTMA). The Cytoplasmic portion of the chain corresponds to 399–659 (YEEQNQATIA…KWMKFKMVLF (261 aa)). Residues Ser440, Ser443, Ser466, and Ser478 each carry the phosphoserine modification. 2 disordered regions span residues 442 to 484 (HSHN…YNQR) and 510 to 578 (SQDV…ELTT). Residues 475 to 484 (SPQSDPYNQR) are compositionally biased toward polar residues. Positions 523–533 (GVFHGDHESHR) are enriched in basic and acidic residues. A phosphoserine mark is found at Ser612 and Ser615. One copy of the II repeat lies at 647–911 (CCPKWMKFKM…EDDGEVNNLQ (265 aa)). Residues 660 to 684 (ELVTDPFAELTITLCIVVNTIFMAM) form a helical membrane-spanning segment. Residues 685 to 695 (EHYPMTDAFDA) are Extracellular-facing. A helical transmembrane segment spans residues 696-719 (MLQAGNIVFTVFFTMEMAFKIIAF). The Cytoplasmic segment spans residues 720–727 (DPYYYFQK). Residues 728-747 (KWNVFDCVIVTVSLLELSIA) form a helical membrane-spanning segment. The Extracellular segment spans residues 748-753 (KKGSLS). Residues 754–773 (VLRTFRLLRVFKLAKSWPTL) traverse the membrane as a helical; Voltage-sensor segment. The Cytoplasmic portion of the chain corresponds to 774 to 789 (NTLIKIIGNSVGALGN). A helical membrane pass occupies residues 790–810 (LTFILAIIVFIFALVGKQLLG). The Extracellular segment spans residues 811-834 (EDYGCRKDGTALWNEGQLRWHMCD). The pore-forming intramembrane region spans 835-855 (FFHSFLVIFRILCGEWIENMW). At 856 to 864 (VCMQVSEKS) the chain is on the extracellular side. Cys857 and Cys866 form a disulfide bridge. The helical transmembrane segment at 865 to 890 (ICLILFLTVMVLGNLVVLNLFIALLL) threads the bilayer. At 891–1149 (NSFSADNLTA…GWQVRKTCYR (259 aa)) the chain is on the cytoplasmic side. Acidic residues predominate over residues 1004-1016 (GESDLDELEEDIE). 2 disordered regions span residues 1004 to 1034 (GESDLDELEEDIEQNSQSSWREESPKGQQDQ) and 1071 to 1097 (ATPQVPAEGVDDTSSSEGSTVDCPDPE). The stretch at 1142–1451 (QVRKTCYRIV…KKYYNAMKKL (310 aa)) is one III repeat. A helical transmembrane segment spans residues 1150 to 1173 (IVEHSWFESFIIFMILLSSGALAF). Over 1174-1186 (EDNYLEQKPRVKS) the chain is Extracellular. Residues 1187-1212 (MLEYTDRVFTFIFVFEMLLKWVAYGF) form a helical membrane-spanning segment. The Cytoplasmic portion of the chain corresponds to 1213-1218 (KKYFTN). Residues 1219-1240 (AWCWLDFLIVNISLTSLIAKIL) form a helical membrane-spanning segment. Topologically, residues 1241–1244 (DYSD) are extracellular. The helical; Voltage-sensor transmembrane segment at 1245–1266 (VASLKALRTLRALRPLRALSRF) threads the bilayer. At 1267-1285 (EGMRVVVDALVGAIPSIMN) the chain is on the cytoplasmic side. The helical transmembrane segment at 1286–1313 (VLLVCLIFWLIFSIMGVNLFAGKFSRCI) threads the bilayer. The Extracellular segment spans residues 1314–1355 (DTSNNPFSVVNSTIVNNKSECRNQNHTGHFFWVNVKVNFDNV). Residues 1356–1377 (AMGYLALLQVATFKGWMDIMYA) constitute an intramembrane region (pore-forming). At 1378-1393 (AVDSREINSQPQWEDN) the chain is on the extracellular side. The helical transmembrane segment at 1394 to 1420 (LYMYLYFVVFIIFGGFFTLNLFVGVII) threads the bilayer. Residues 1421–1473 (DNFNQQKKKLGGQDIFMTEEQKKYYNAMKKLGSKKPQKPIPRPLNKYQGFVFD) are Cytoplasmic-facing. At Ser1453 the chain carries Phosphoserine; by PKC. An IV repeat occupies 1460 to 1759 (IPRPLNKYQG…WEKFDPEATQ (300 aa)). The helical transmembrane segment at 1474–1497 (IVTRQAFDIIIMVLICLNMITMMV) threads the bilayer. Over 1498–1508 (ETDGQSEEKTK) the chain is Extracellular. The chain crosses the membrane as a helical span at residues 1509 to 1532 (ILGRINQFFVAVFTGECVMKMFAL). Residues 1533-1538 (RQYYFT) lie on the Cytoplasmic side of the membrane. Residues 1539-1562 (NGWNVFDFIVVILSIGSLVFSAIL) traverse the membrane as a helical segment. Residues 1563–1574 (KSLESYFSPTLF) lie on the Extracellular side of the membrane. The helical; Voltage-sensor transmembrane segment at 1575-1596 (RVIRLARIGRILRLIRAAKGIR) threads the bilayer. At 1597–1611 (TLLFALMMSLPALFN) the chain is on the cytoplasmic side. Residues 1612-1634 (IGLLLFLVMFIYSIFGMASFANV) form a helical membrane-spanning segment. The Extracellular portion of the chain corresponds to 1635–1648 (VEEAGIDDMFNFQT). The segment at residues 1649 to 1671 (FGNSMLCLFQITTSAGWDGLLSP) is an intramembrane region (pore-forming). At 1672–1699 (ILNTGPPYCDPNLSNNNTSKGNCGSPTV) the chain is on the extracellular side. A helical membrane pass occupies residues 1700–1724 (GIVFFTTYIIISFLIVVNMYIAVIL). Over 1725–1959 (ENFNVATEES…SKEGDSPGPQ (235 aa)) the chain is Cytoplasmic. One can recognise an IQ domain in the interval 1853–1882 (EDISATVIQKAYRSYVLQRSLTLSNPLRVP). The segment at 1901–1959 (ANDSGRLPDKSETTSATSFPPSYDSVTRGLSDRVNISTSNSMHNEDEVTSKEGDSPGPQ) is disordered. Over residues 1943–1959 (HNEDEVTSKEGDSPGPQ) the composition is skewed to basic and acidic residues.

The protein belongs to the sodium channel (TC 1.A.1.10) family. Nav1.8/SCN10A subfamily. The channel consists of an ion conducting pore forming alpha-subunit regulated by one or more associated auxiliary subunits SCN1B, SCN2B and SCN3B; electrophysiological properties may vary depending on the type of the associated beta subunits. Found in a number of complexes with PRX, DYNLT1 and PDZD2. Interacts with proteins such as FSTL1, PRX, DYNLT1, PDZD2, S100A10 and many others. Interacts with NEDD4 and NEDD4L. Ubiquitinated by NEDD4L; which promotes its endocytosis. Post-translationally, phosphorylation at Ser-1453 by PKC in a highly conserved cytoplasmic loop slows inactivation of the sodium channel and reduces peak sodium currents. In terms of processing, lacks the cysteine which covalently binds the conotoxin GVIIJ. This cysteine (position 816) is speculated in other sodium channel subunits alpha to be implied in covalent binding with the sodium channel subunit beta-2 or beta-4.

The protein resides in the cell membrane. The catalysed reaction is Na(+)(in) = Na(+)(out). In terms of biological role, tetrodotoxin-resistant channel that mediates the voltage-dependent sodium ion permeability of excitable membranes. Assuming opened or closed conformations in response to the voltage difference across the membrane, the protein forms a sodium-selective channel through which sodium ions may pass in accordance with their electrochemical gradient. Plays a role in neuropathic pain mechanisms. The sequence is that of Sodium channel protein type 10 subunit alpha (Scn10a) from Onychomys torridus (Southern grasshopper mouse).